A 204-amino-acid chain; its full sequence is Ancillary SecYEG translocon subunit (204 aa).

Residues M1–K23 are Cytoplasmic-facing. The chain crosses the membrane as a helical span at residues F24–S44. Residues H45–L204 lie on the Periplasmic side of the membrane.

The protein belongs to the YfgM family. As to quaternary structure, interacts with the SecYEG translocon. Forms a complex with PpiD.

The protein localises to the cell inner membrane. Functionally, may mediate protein transfer from the SecYEG translocon to the periplasmic chaperone network via its periplasmic C-terminal region. The polypeptide is Ancillary SecYEG translocon subunit (1057) (Aggregatibacter actinomycetemcomitans (Actinobacillus actinomycetemcomitans)).